We begin with the raw amino-acid sequence, 269 residues long: MGTEKESPEPDCQKQFQAAVSVIQNLPKNGSYRPSYEEMLRFYSYYKQATMGPCLVPRPGFWDPIGRYKWDAWNSLGKMSREEAMSAYITEMKLVAQKVIDTVPLGEVAEDMFAYFEPLYQVIPDMPRPPETFLRRVTGWKEQVVNGDVGAVSEPPCLPKEPAPPSPESHSPRDLDSEVFCDSLEQLEPELVWTEQRAASGEKRDPRNSPVPPTEKEAAAQAQCSAMAPWAPRARAALLPPVALRRPVALPNVSDPKEVTVSGGVSAAN.

The ACB domain maps to 12-101 (CQKQFQAAVS…MKLVAQKVID (90 aa)). Residues 23–32 (IQNLPKNGSY), 43–47 (YSYYK), Lys-69, and Tyr-88 contribute to the an acyl-CoA site. Disordered regions lie at residues 150 to 175 (GAVS…PRDL), 195 to 226 (EQRA…QCSA), and 248 to 269 (VALP…SAAN). A compositionally biased stretch (pro residues) spans 156 to 167 (PCLPKEPAPPSP). A phosphoserine mark is found at Ser-166 and Ser-171.

Its function is as follows. Binds medium- and long-chain acyl-CoA esters and may function as an intracellular carrier of acyl-CoA esters. This Pongo abelii (Sumatran orangutan) protein is Acyl-CoA-binding domain-containing protein 4 (ACBD4).